The primary structure comprises 347 residues: Virulence plasmid protein pGP2-D (347 aa).

This is Virulence plasmid protein pGP2-D from Chlamydia psittaci (Chlamydophila psittaci).